The primary structure comprises 324 residues: MKTAKIYQYQLPMDSGVILRDQRLQQRDGLIIELSDGKHTAKGEIAPLPEFSQENLEQAREDLISLTQAWLNDEVLDVDANCPSVAFGFSMALLELENNLPEVGNYQVAPLCSGDPDDLVVKLNEMSGKKVAKIKVGMYEAIRDGMVANMFLELIPDLSLRLDANRGWTPKKAEQFANYVSPQYRSRIEFLEEPCHRPEESLEFSKATGIAIAWDETVRDEGFEVKAQDGVAAIVIKPTLVGSVGKCIELVEQAHLLGMQAVISSSIESSLALTQLARLAAWKTPNTIPGLDTIDLFKMQLDTPWPHCELPMQALSDLEVIWES.

Residue Lys-135 is the Proton donor of the active site. The Mg(2+) site is built by Asp-163, Glu-192, and Asp-215. Catalysis depends on Lys-237, which acts as the Proton acceptor.

Belongs to the mandelate racemase/muconate lactonizing enzyme family. MenC type 1 subfamily. It depends on a divalent metal cation as a cofactor.

It catalyses the reaction (1R,6R)-6-hydroxy-2-succinyl-cyclohexa-2,4-diene-1-carboxylate = 2-succinylbenzoate + H2O. It participates in quinol/quinone metabolism; 1,4-dihydroxy-2-naphthoate biosynthesis; 1,4-dihydroxy-2-naphthoate from chorismate: step 4/7. The protein operates within quinol/quinone metabolism; menaquinone biosynthesis. Functionally, converts 2-succinyl-6-hydroxy-2,4-cyclohexadiene-1-carboxylate (SHCHC) to 2-succinylbenzoate (OSB). This is o-succinylbenzoate synthase from Aliivibrio salmonicida (strain LFI1238) (Vibrio salmonicida (strain LFI1238)).